The primary structure comprises 414 residues: Carbohydrate sulfotransferase 12 (414 aa).

At 1–5 the chain is on the cytoplasmic side; it reads MTKAR. The helical; Signal-anchor for type II membrane protein transmembrane segment at 6 to 26 threads the bilayer; it reads LFRLWLVLGSVFMILLIIVYW. Over 27-414 the chain is Lumenal; sequence DSAGAAHFYL…YPKPENLLRD (388 aa). The segment at 80-125 is disordered; the sequence is QSDLPRKETEQPPAPGSMEESVRGYDWSPRDARRSPDQGRQQAERR. Basic and acidic residues predominate over residues 99–125; that stretch reads ESVRGYDWSPRDARRSPDQGRQQAERR. Asn-134 is a glycosylation site (N-linked (GlcNAc...) asparagine). Residue 171–177 coordinates 3'-phosphoadenylyl sulfate; it reads PKVACTN. A glycan (N-linked (GlcNAc...) asparagine) is linked at Asn-209. A 3'-phosphoadenylyl sulfate-binding site is contributed by 245–253; the sequence is RDPFVRLIS. 2 N-linked (GlcNAc...) asparagine glycosylation sites follow: Asn-280 and Asn-370.

The protein belongs to the sulfotransferase 2 family. In terms of tissue distribution, widely expressed. Expressed a high level in spinal chord, heart, spleen, thyroid, pituitary gland, adrenal gland, peripheral blood leukocytes, thymus, lung, small intestine, fetal kidney, fetal spleen and fetal lung.

It is found in the golgi apparatus membrane. The catalysed reaction is chondroitin beta-D-glucuronate + n 3'-phosphoadenylyl sulfate = chondroitin 4'-sulfate + n adenosine 3',5'-bisphosphate + n H(+). Its function is as follows. Catalyzes the transfer of sulfate to position 4 of the N-acetylgalactosamine (GalNAc) residue of chondroitin and desulfated dermatan sulfate. Chondroitin sulfate constitutes the predominant proteoglycan present in cartilage and is distributed on the surfaces of many cells and extracellular matrices. Activity toward partially desulfated dermatan sulfate is however lower. Does not form 4, 6-di-O-sulfated GalNAc when chondroitin sulfate C is used as an acceptor. In Homo sapiens (Human), this protein is Carbohydrate sulfotransferase 12 (CHST12).